Here is a 136-residue protein sequence, read N- to C-terminus: ATP synthase F(0) complex subunit C1, mitochondrial (136 aa).

The transit peptide at 1-61 directs the protein to the mitochondrion; sequence MQTTKALLIS…REFQTSVISR (61 aa). The chain crosses the membrane as a helical span at residues 77–97; sequence VGVAGSGAGIGTVFGSLIIGY. Lys104 carries the N6,N6,N6-trimethyllysine modification. A helical transmembrane segment spans residues 112 to 132; that stretch reads ILGFALSEAMGLFCLMVAFLI.

This sequence belongs to the ATPase C chain family. Homooctamer; the c-ring consists of eight c subunits forming a circle, and each subunit adopts a hairpin shape. Component of the ATP synthase complex composed at least of ATP5F1A/subunit alpha, ATP5F1B/subunit beta, ATP5MC1/subunit c (homooctomer), MT-ATP6/subunit a, MT-ATP8/subunit 8, ATP5ME/subunit e, ATP5MF/subunit f, ATP5MG/subunit g, ATP5MK/subunit k, ATP5MJ/subunit j, ATP5F1C/subunit gamma, ATP5F1D/subunit delta, ATP5F1E/subunit epsilon, ATP5PF/subunit F6, ATP5PB/subunit b, ATP5PD/subunit d, ATP5PO/subunit OSCP. ATP synthase complex consists of a soluble F(1) head domain (subunits alpha(3) and beta(3)) - the catalytic core - and a membrane F(0) domain - the membrane proton channel (subunits c, a, 8, e, f, g, k and j). These two domains are linked by a central stalk (subunits gamma, delta, and epsilon) rotating inside the F1 region and a stationary peripheral stalk (subunits F6, b, d, and OSCP). Interacts with TMEM70 (homooligomer form); this interaction facilitates the oligomer formation of subunit c/ATP5MC1 (c-ring) and the c-ring membrane insertion and also protects ATP5MC1 against intramitochondrial proteolysis. Post-translationally, trimethylated by ATPSCKMT at Lys-104. Methylation is required for proper incorporation of the C subunit into the ATP synthase complex and mitochondrial respiration.

Its subcellular location is the mitochondrion membrane. It catalyses the reaction H(+)(in) = H(+)(out). Functionally, subunit c, of the mitochondrial membrane ATP synthase complex (F(1)F(0) ATP synthase or Complex V) that produces ATP from ADP in the presence of a proton gradient across the membrane which is generated by electron transport complexes of the respiratory chain. ATP synthase complex consist of a soluble F(1) head domain - the catalytic core - and a membrane F(1) domain - the membrane proton channel. These two domains are linked by a central stalk rotating inside the F(1) region and a stationary peripheral stalk. During catalysis, ATP synthesis in the catalytic domain of F(1) is coupled via a rotary mechanism of the central stalk subunits to proton translocation. With the subunit a (MT-ATP6), forms the proton-conducting channel in the F(0) domain, that contains two crucial half-channels (inlet and outlet) that facilitate proton movement from the mitochondrial intermembrane space (IMS) into the matrix. Protons are taken up via the inlet half-channel and released through the outlet half-channel, following a Grotthuss mechanism. The chain is ATP synthase F(0) complex subunit C1, mitochondrial from Rattus norvegicus (Rat).